Here is a 176-residue protein sequence, read N- to C-terminus: Isopentenyl-diphosphate Delta-isomerase (176 aa).

The Mn(2+) site is built by H22 and H28. The Nudix hydrolase domain maps to 26 to 160 (LRHKAVSVFV…PDRYTPWLRI (135 aa)). C62 is an active-site residue. Residue H64 coordinates Mn(2+). A Mg(2+)-binding site is contributed by E82. Mn(2+) is bound by residues E108 and E110. The active site involves E110.

The protein belongs to the IPP isomerase type 1 family. It depends on Mg(2+) as a cofactor. The cofactor is Mn(2+).

The protein resides in the cytoplasm. It catalyses the reaction isopentenyl diphosphate = dimethylallyl diphosphate. It participates in isoprenoid biosynthesis; dimethylallyl diphosphate biosynthesis; dimethylallyl diphosphate from isopentenyl diphosphate: step 1/1. The protein operates within porphyrin-containing compound metabolism; chlorophyll biosynthesis. Functionally, catalyzes the 1,3-allylic rearrangement of the homoallylic substrate isopentenyl (IPP) to its highly electrophilic allylic isomer, dimethylallyl diphosphate (DMAPP). In Roseobacter denitrificans (strain ATCC 33942 / OCh 114) (Erythrobacter sp. (strain OCh 114)), this protein is Isopentenyl-diphosphate Delta-isomerase.